We begin with the raw amino-acid sequence, 67 residues long: UPF0337 protein CC_0938 (67 aa).

The disordered stretch occupies residues 37-67 (AAQKAKGDLQNKVGKAQDKARRRDQALNARL). Basic and acidic residues predominate over residues 41 to 61 (AKGDLQNKVGKAQDKARRRDQ).

It belongs to the UPF0337 (CsbD) family.

In Caulobacter vibrioides (strain ATCC 19089 / CIP 103742 / CB 15) (Caulobacter crescentus), this protein is UPF0337 protein CC_0938.